Here is a 191-residue protein sequence, read N- to C-terminus: Peptidyl-tRNA hydrolase (191 aa).

Tyr16 lines the tRNA pocket. His21 functions as the Proton acceptor in the catalytic mechanism. 3 residues coordinate tRNA: Phe66, Asn68, and Asn114.

The protein belongs to the PTH family. Monomer.

The protein localises to the cytoplasm. It catalyses the reaction an N-acyl-L-alpha-aminoacyl-tRNA + H2O = an N-acyl-L-amino acid + a tRNA + H(+). Hydrolyzes ribosome-free peptidyl-tRNAs (with 1 or more amino acids incorporated), which drop off the ribosome during protein synthesis, or as a result of ribosome stalling. Functionally, catalyzes the release of premature peptidyl moieties from peptidyl-tRNA molecules trapped in stalled 50S ribosomal subunits, and thus maintains levels of free tRNAs and 50S ribosomes. The polypeptide is Peptidyl-tRNA hydrolase (Geotalea uraniireducens (strain Rf4) (Geobacter uraniireducens)).